The chain runs to 463 residues: L-seryl-tRNA(Sec) selenium transferase (463 aa).

Lys-295 carries the N6-(pyridoxal phosphate)lysine modification.

This sequence belongs to the SelA family. In terms of assembly, homodecamer; pentamer of dimers. Binds only one seryl-tRNA(Sec) per dimer. It depends on pyridoxal 5'-phosphate as a cofactor.

It is found in the cytoplasm. The enzyme catalyses L-seryl-tRNA(Sec) + selenophosphate + H(+) = L-selenocysteinyl-tRNA(Sec) + phosphate. It functions in the pathway aminoacyl-tRNA biosynthesis; selenocysteinyl-tRNA(Sec) biosynthesis; selenocysteinyl-tRNA(Sec) from L-seryl-tRNA(Sec) (bacterial route): step 1/1. Functionally, converts seryl-tRNA(Sec) to selenocysteinyl-tRNA(Sec) required for selenoprotein biosynthesis. This Edwardsiella ictaluri (strain 93-146) protein is L-seryl-tRNA(Sec) selenium transferase.